Consider the following 194-residue polypeptide: Nucleoside triphosphate pyrophosphatase (194 aa).

Residue Asp-68 is the Proton acceptor of the active site.

It belongs to the Maf family. Requires a divalent metal cation as cofactor.

It is found in the cytoplasm. The catalysed reaction is a ribonucleoside 5'-triphosphate + H2O = a ribonucleoside 5'-phosphate + diphosphate + H(+). The enzyme catalyses a 2'-deoxyribonucleoside 5'-triphosphate + H2O = a 2'-deoxyribonucleoside 5'-phosphate + diphosphate + H(+). Nucleoside triphosphate pyrophosphatase. May have a dual role in cell division arrest and in preventing the incorporation of modified nucleotides into cellular nucleic acids. This chain is Nucleoside triphosphate pyrophosphatase, found in Corynebacterium jeikeium (strain K411).